Consider the following 118-residue polypeptide: Large ribosomal subunit protein bL19 (118 aa).

This sequence belongs to the bacterial ribosomal protein bL19 family.

This protein is located at the 30S-50S ribosomal subunit interface and may play a role in the structure and function of the aminoacyl-tRNA binding site. The protein is Large ribosomal subunit protein bL19 of Herpetosiphon aurantiacus (strain ATCC 23779 / DSM 785 / 114-95).